The primary structure comprises 342 residues: D-alanine--D-alanine ligase (342 aa).

Residues 132 to 326 (KLYAKECGIE…VAKHLPKSKN (195 aa)) enclose the ATP-grasp domain. Residue 159 to 210 (EYPVIIKPNHLGSSIGVSVVYDSSELEYALDVAFEFDDEVLIEPFIEGIEEY) participates in ATP binding. Asp282, Glu294, and Asn296 together coordinate Mg(2+).

Belongs to the D-alanine--D-alanine ligase family. Mg(2+) serves as cofactor. It depends on Mn(2+) as a cofactor.

It is found in the cytoplasm. The enzyme catalyses 2 D-alanine + ATP = D-alanyl-D-alanine + ADP + phosphate + H(+). It functions in the pathway cell wall biogenesis; peptidoglycan biosynthesis. Functionally, cell wall formation. The protein is D-alanine--D-alanine ligase of Nitratiruptor sp. (strain SB155-2).